Here is a 194-residue protein sequence, read N- to C-terminus: dITP/XTP pyrophosphatase (194 aa).

8–13 (TKNKGK) is a binding site for substrate. E41 and D70 together coordinate Mg(2+). Residue D70 is the Proton acceptor of the active site. Substrate contacts are provided by residues S71, 153–156 (FGYD), K176, and 181–182 (HR).

Belongs to the HAM1 NTPase family. In terms of assembly, homodimer. Mg(2+) serves as cofactor.

It carries out the reaction XTP + H2O = XMP + diphosphate + H(+). The catalysed reaction is dITP + H2O = dIMP + diphosphate + H(+). It catalyses the reaction ITP + H2O = IMP + diphosphate + H(+). In terms of biological role, pyrophosphatase that catalyzes the hydrolysis of nucleoside triphosphates to their monophosphate derivatives, with a high preference for the non-canonical purine nucleotides XTP (xanthosine triphosphate), dITP (deoxyinosine triphosphate) and ITP. Seems to function as a house-cleaning enzyme that removes non-canonical purine nucleotides from the nucleotide pool, thus preventing their incorporation into DNA/RNA and avoiding chromosomal lesions. This chain is dITP/XTP pyrophosphatase, found in Halalkalibacterium halodurans (strain ATCC BAA-125 / DSM 18197 / FERM 7344 / JCM 9153 / C-125) (Bacillus halodurans).